The primary structure comprises 1280 residues: Dynactin subunit 1 (1280 aa).

Residues 1–26 (MAQSKRHMYNRTPSGSRMSTEASARP) form a disordered region. The segment covering 11–22 (RTPSGSRMSTEA) has biased composition (polar residues). Residues 48-90 (GATLFATGKWVGVILDEAKGKNDGTVQGRKYFTCDEGHGIFVR) form the CAP-Gly domain. The tract at residues 99-223 (DGADTTSPET…SKEEEGLRDQ (125 aa)) is disordered. Residues 102–114 (DTTSPETPDSSAS) are compositionally biased toward polar residues. Phosphothreonine is present on residues Thr108, Thr145, Thr146, and Thr147. The segment covering 129–152 (SKLRGLKPKKAPTARKTTTRRPKP) has biased composition (basic residues). Low complexity predominate over residues 161–205 (AGPSSSLGPSGSASAGELSSSEPSTPAQTPLAAPIIPTPALTSPG). Phosphoserine; by PLK1 is present on Ser179. The residue at position 212 (Ser212) is a Phosphoserine; by CDK1. Positions 214 to 223 (SKEEEGLRDQ) are enriched in basic and acidic residues. Coiled coils occupy residues 214 to 513 (SKEE…ADYQ) and 942 to 1048 (LKLE…EGLR). Positions 910–1280 (EYDAERPPSK…LHQLHGRLIS (371 aa)) are interaction with HPS6. The interval 1064–1089 (GEEQQRGGTPGQAPGALPGPGPVKDS) is disordered. Residues 1184–1213 (SAQLMEQVAQLKSLSDTIEKLKDEVLKETV) are a coiled coil.

The protein belongs to the dynactin 150 kDa subunit family. As to quaternary structure, monomer and homodimer. Subunit of dynactin, a multiprotein complex part of a tripartite complex with dynein and a adapter, such as BICDL1, BICD2 or HOOK3. The dynactin complex is built around ACTR1A/ACTB filament and consists of an actin-related filament composed of a shoulder domain, a pointed end and a barbed end. Its length is defined by its flexible shoulder domain. The soulder is composed of 2 DCTN1 subunits, 4 DCTN2 and 2 DCTN3. DCTN1/p150(glued) binds directly to microtubules and to cytoplasmic dynein. The 4 DCNT2 (via N-terminus) bind the ACTR1A filament and act as molecular rulers to determine the length. The pointed end is important for binding dynein-dynactin cargo adapters. Consists of 4 subunits: ACTR10, DCNT4, DCTN5 and DCTN6. The barbed end is composed of a CAPZA1:CAPZB heterodimers, which binds ACTR1A/ACTB filament and dynactin and stabilizes dynactin. Interacts with the C-terminus of MAPRE1, MAPRE2 and MAPRE3. Interacts (via C-terminus) with SNX6. Interacts with CLN3, DYNAP, ECPAS and FBXL5. Interacts with MISP; this interaction regulates its distribution at the cell cortex. Interacts with CEP131. Interacts with CEP126. Interacts with CLIP1. Interacts with dynein intermediate chain and dynein heavy chain. Interacts with PLK1 (via POLO-box domain). Interacts with TBCB. Binds preferentially to tyrosinated microtubules than to detyrosinated microtubules. Interacts with PARD6A. Interacts with HPS6. Interacts with KIF3A. Interacts with BICD2. Interacts with DST (isoform 9). Interacts with DST (isoform 1). Identified in a complex with MREG and RILP. Interacts with BCCIP (isoform 2/alpha). Interacts with DCDC1. Interacts with AKNA. Interacts with DYNC1I2. Interacts with RUFY3 and RUFY4. In terms of processing, ubiquitinated by a SCF complex containing FBXL5, leading to its degradation by the proteasome. Post-translationally, phosphorylation by SLK at Thr-145, Thr-146 and Thr-147 targets DCTN1 to the centrosome. It is uncertain if SLK phosphorylates all three threonines or one or two of them. PLK1-mediated phosphorylation at Ser-179 is essential for its localization in the nuclear envelope and promotes its dissociation from microtubules during early mitosis and positively regulates nuclear envelope breakdown during prophase. In terms of tissue distribution, ubiquitous with a high level expression observed in the brain (at protein level).

The protein localises to the cytoplasm. Its subcellular location is the cytoskeleton. It is found in the microtubule organizing center. It localises to the centrosome. The protein resides in the centriole. The protein localises to the spindle. Its subcellular location is the nucleus envelope. It is found in the cell cortex. In terms of biological role, part of the dynactin complex that activates the molecular motor dynein for ultra-processive transport along microtubules. Plays a key role in dynein-mediated retrograde transport of vesicles and organelles along microtubules by recruiting and tethering dynein to microtubules. Binds to both dynein and microtubules providing a link between specific cargos, microtubules and dynein. Essential for targeting dynein to microtubule plus ends, recruiting dynein to membranous cargos and enhancing dynein processivity (the ability to move along a microtubule for a long distance without falling off the track). Can also act as a brake to slow the dynein motor during motility along the microtubule. Can regulate microtubule stability by promoting microtubule formation, nucleation and polymerization and by inhibiting microtubule catastrophe in neurons. Inhibits microtubule catastrophe by binding both to microtubules and to tubulin, leading to enhanced microtubule stability along the axon. Plays a role in metaphase spindle orientation. Plays a role in centriole cohesion and subdistal appendage organization and function. Its recruitment to the centriole in a KIF3A-dependent manner is essential for the maintenance of centriole cohesion and the formation of subdistal appendage. Also required for microtubule anchoring at the mother centriole. Plays a role in primary cilia formation. This Rattus norvegicus (Rat) protein is Dynactin subunit 1 (Dctn1).